The sequence spans 504 residues: Glucose-6-phosphate isomerase (504 aa).

The Proton donor role is filled by E333. Active-site residues include H364 and K473.

It belongs to the GPI family.

Its subcellular location is the cytoplasm. It catalyses the reaction alpha-D-glucose 6-phosphate = beta-D-fructose 6-phosphate. It functions in the pathway carbohydrate biosynthesis; gluconeogenesis. The protein operates within carbohydrate degradation; glycolysis; D-glyceraldehyde 3-phosphate and glycerone phosphate from D-glucose: step 2/4. Its function is as follows. Catalyzes the reversible isomerization of glucose-6-phosphate to fructose-6-phosphate. In Xanthomonas oryzae pv. oryzae (strain MAFF 311018), this protein is Glucose-6-phosphate isomerase.